The primary structure comprises 536 residues: Chaperonin GroEL 2 (536 aa).

Residues 29 to 32, K50, G416, and D497 each bind ATP; that span reads TLGP.

It belongs to the chaperonin (HSP60) family. Forms a cylinder of 14 subunits composed of two heptameric rings stacked back-to-back. Interacts with the co-chaperonin GroES.

The protein resides in the cytoplasm. The catalysed reaction is ATP + H2O + a folded polypeptide = ADP + phosphate + an unfolded polypeptide.. Functionally, together with its co-chaperonin GroES, plays an essential role in assisting protein folding. The GroEL-GroES system forms a nano-cage that allows encapsulation of the non-native substrate proteins and provides a physical environment optimized to promote and accelerate protein folding. The polypeptide is Chaperonin GroEL 2 (Chlamydia caviae (strain ATCC VR-813 / DSM 19441 / 03DC25 / GPIC) (Chlamydophila caviae)).